Consider the following 205-residue polypeptide: Probable GTP-binding protein EngB (205 aa).

Residues 27–201 (SGIEIAFAGR…AAKLDSWFAP (175 aa)) enclose the EngB-type G domain. Residues 35 to 42 (GRSNAGKS), 62 to 66 (GRTQL), 80 to 83 (DLPG), 147 to 150 (TKAD), and 180 to 182 (FSA) contribute to the GTP site. Positions 42 and 64 each coordinate Mg(2+).

The protein belongs to the TRAFAC class TrmE-Era-EngA-EngB-Septin-like GTPase superfamily. EngB GTPase family. Mg(2+) serves as cofactor.

Functionally, necessary for normal cell division and for the maintenance of normal septation. This chain is Probable GTP-binding protein EngB, found in Pasteurella multocida (strain Pm70).